The chain runs to 144 residues: MKTVELTNGSKKKVEDRIVGRHVYGNLYGVDPAKLWDEEGLKELVREAAEVANMKLVEVRSWKFTGYHGGVSVMALVLESHITIHTWPDYEYATVDVYTCGERSDPWRAFELIVERLEPEDYVVHYSDRSSPKRPLGGTAGRIQ.

The active-site Schiff-base intermediate with substrate; via pyruvic acid is serine 80. Pyruvic acid (Ser); by autocatalysis is present on serine 80. The active-site Proton acceptor; for processing activity is the histidine 85. Cysteine 100 functions as the Proton donor; for catalytic activity in the catalytic mechanism.

It belongs to the prokaryotic AdoMetDC family. Type 1 subfamily. As to quaternary structure, heterooctamer of four alpha and four beta chains arranged as a tetramer of alpha/beta heterodimers. Pyruvate is required as a cofactor. Post-translationally, is synthesized initially as an inactive proenzyme. Formation of the active enzyme involves a self-maturation process in which the active site pyruvoyl group is generated from an internal serine residue via an autocatalytic post-translational modification. Two non-identical subunits are generated from the proenzyme in this reaction, and the pyruvate is formed at the N-terminus of the alpha chain, which is derived from the carboxyl end of the proenzyme. The post-translation cleavage follows an unusual pathway, termed non-hydrolytic serinolysis, in which the side chain hydroxyl group of the serine supplies its oxygen atom to form the C-terminus of the beta chain, while the remainder of the serine residue undergoes an oxidative deamination to produce ammonia and the pyruvoyl group blocking the N-terminus of the alpha chain.

The catalysed reaction is L-arginine + H(+) = agmatine + CO2. It functions in the pathway amine and polyamine biosynthesis; agmatine biosynthesis; agmatine from L-arginine: step 1/1. In terms of biological role, specifically catalyzes the decarboxylation of L-arginine to agmatine. Has no S-adenosylmethionine decarboxylase (AdoMetDC) activity. The polypeptide is Arginine decarboxylase proenzyme (Ignicoccus hospitalis (strain KIN4/I / DSM 18386 / JCM 14125)).